Consider the following 390-residue polypeptide: Neutrophil cytosol factor 1 (390 aa).

The PX domain occupies 4–125 (TFIRHIALLG…DFFKVRPDDL (122 aa)). SH3 domains lie at 156-215 (IILQ…PLDS) and 226-285 (YAGE…KSGQ). Residues 285–390 (QDVSQAQRQI…STKRKLASAV (106 aa)) form a disordered region. Phosphoserine is present on residues Ser303 and Ser304. Residues 309-318 (HSIHQRSRKR) show a composition bias toward basic residues. Phosphoserine is present on residues Ser320, Ser328, Ser345, and Ser348.

In terms of assembly, component of the phagocyte NADPH oxidase complex composed of an obligatory core heterodimer formed by the membrane proteins CYBA and CYBB and the cytosolic regulatory subunits NCF1/p47-phox, NCF2/p67-phox, NCF4/p40-phox and the small GTPase RAC1 or RAC2. Part of a cytosolic complex composed at least by NCF1, NCF2 and NCF4. Interacts (via C-terminus) with NCF2 (via the C-terminal SH3 domain). Interacts with NCF4. Interacts with CYBB. Interacts (via the second SH3 domain) with CYBA; interaction is phosphorylation-dependent. Interacts with NOXA1. Interacts with ADAM15. Interacts with TRAF4. Interacts with FASLG. Interacts with PARK7 (via C-terminus); the interaction is enhanced by LPS and modulates NCF1 phosphorylation and membrane translocation. Phosphorylated by PRKCD; phosphorylation induces activation of NCF1, leading to assembly and activation of the NADPH oxidase complex. Detected in peripheral blood monocytes and neutrophils (at protein level).

It is found in the cytoplasm. The protein resides in the cytosol. Its subcellular location is the membrane. In terms of biological role, subunit of the phagocyte NADPH oxidase complex that mediates the transfer of electrons from cytosolic NADPH to O2 to produce the superoxide anion (O2(-)). In the activated complex, electrons are first transferred from NADPH to flavin adenine dinucleotide (FAD) and subsequently transferred via two heme molecules to molecular oxygen, producing superoxide through an outer-sphere reaction. Activation of the NADPH oxidase complex is initiated by the assembly of cytosolic subunits of the NADPH oxidase complex with the core NADPH oxidase complex to form a complex at the plasma membrane or phagosomal membrane. This activation process is initiated by phosphorylation dependent binding of the cytosolic NCF1/p47-phox subunit to the C-terminus of CYBA/p22-phox. The protein is Neutrophil cytosol factor 1 of Homo sapiens (Human).